A 127-amino-acid polypeptide reads, in one-letter code: Small ribosomal subunit protein uS13 (127 aa).

A disordered region spans residues 90–127; the sequence is KRHREGLPVNGQRTRTNARTRKGKRKTVAGRSQSTQKK. Over residues 105–117 the composition is skewed to basic residues; the sequence is TNARTRKGKRKTV.

Belongs to the universal ribosomal protein uS13 family. Part of the 30S ribosomal subunit. Forms a loose heterodimer with protein S19. Forms two bridges to the 50S subunit in the 70S ribosome.

Functionally, located at the top of the head of the 30S subunit, it contacts several helices of the 16S rRNA. In the 70S ribosome it contacts the 23S rRNA (bridge B1a) and protein L5 of the 50S subunit (bridge B1b), connecting the 2 subunits; these bridges are implicated in subunit movement. Contacts the tRNAs in the A and P-sites. This chain is Small ribosomal subunit protein uS13, found in Salinibacter ruber (strain DSM 13855 / M31).